Consider the following 217-residue polypeptide: Protein OPI10 homolog (217 aa).

This sequence belongs to the OPI10 family.

The sequence is that of Protein OPI10 homolog from Dictyostelium discoideum (Social amoeba).